The primary structure comprises 84 residues: Putative regulatory protein Hore_09800 (84 aa).

This sequence belongs to the RemA family.

The polypeptide is Putative regulatory protein Hore_09800 (Halothermothrix orenii (strain H 168 / OCM 544 / DSM 9562)).